The chain runs to 191 residues: NAD(P)H-quinone oxidoreductase subunit L, chloroplastic (191 aa).

The transit peptide at 1 to 46 directs the protein to the chloroplast; the sequence is MSRCGSLGLYAPNALPSLSLKPRSVKSPFCITSHTKPNDTLLHNVN. Transmembrane regions (helical) follow at residues 61 to 81, 93 to 113, and 129 to 149; these read TILA…ALAI, VVLD…PIIM, and YLQF…APFL.

Belongs to the NDH complex subunit L family. Part of the chloroplast NDH complex, composed of a mixture of chloroplast and nucleus encoded subunits. Component of the NDH subcomplex A, at least composed of ndhH, ndhI, ndhJ, ndhK, ndhL, ndhM, ndhN and ndhO.

The protein resides in the plastid. Its subcellular location is the chloroplast thylakoid membrane. It catalyses the reaction a plastoquinone + NADH + (n+1) H(+)(in) = a plastoquinol + NAD(+) + n H(+)(out). It carries out the reaction a plastoquinone + NADPH + (n+1) H(+)(in) = a plastoquinol + NADP(+) + n H(+)(out). In terms of biological role, NDH shuttles electrons from NAD(P)H:plastoquinone, via FMN and iron-sulfur (Fe-S) centers, to quinones in the photosynthetic chain and possibly in a chloroplast respiratory chain. The immediate electron acceptor for the enzyme in this species is believed to be plastoquinone. Couples the redox reaction to proton translocation, and thus conserves the redox energy in a proton gradient. The chain is NAD(P)H-quinone oxidoreductase subunit L, chloroplastic from Arabidopsis thaliana (Mouse-ear cress).